A 320-amino-acid polypeptide reads, in one-letter code: MADPYEFLMCIHNPEEDTLTRNFPIPATPLDQNTKDISLNPDRKTSLRIFRPPTKEPPVTKNKLLPIIIYFHGGGFILFNADSTMNHDFCQSIATHIPALVVSVDYRLAPENRLPAAYDDAVDALNWVKDQGLGKLNNSEVWLKEYGDFSKCFIMGCSSGANVAYHASLRAIEMDLEPAKINGLILHCPFFGSLERTESDSKVINNQDLPLAVRDVMWELALPLGSTRDHVYCNPNIDHDGSSSGNMVGLIERCFVVGFYGDPLIDRQIQLVKMLEEKGVKVETWIEQGGYHGVLCFDPMIRETFLEKLKHFILNDEFIY.

An Involved in the stabilization of the negatively charged intermediate by the formation of the oxyanion hole motif is present at residues 72-74 (HGG). Catalysis depends on residues serine 158, aspartate 262, and histidine 292.

This sequence belongs to the 'GDXG' lipolytic enzyme family.

The enzyme catalyses 3-O-acetylpapaveroxine + H2O = narcotine hemiacetal + acetate + H(+). It participates in alkaloid biosynthesis. Functionally, carboxylesterase involved in the biosynthesis of the benzylisoquinoline alkaloid noscapine. Converts 3-O-acetylpapaveroxine to papaveroxine which spontaneously rearranges to narcotine hemiacetal. This Papaver somniferum (Opium poppy) protein is 3-O-acetylpapaveroxine carboxylesterase CXE1.